The primary structure comprises 513 residues: ATP synthase subunit alpha (513 aa).

An ATP-binding site is contributed by 170 to 177 (GDRQTGKT).

Belongs to the ATPase alpha/beta chains family. In terms of assembly, F-type ATPases have 2 components, CF(1) - the catalytic core - and CF(0) - the membrane proton channel. CF(1) has five subunits: alpha(3), beta(3), gamma(1), delta(1), epsilon(1). CF(0) has four main subunits: a(1), b(1), b'(1) and c(9-12).

Its subcellular location is the cell inner membrane. The enzyme catalyses ATP + H2O + 4 H(+)(in) = ADP + phosphate + 5 H(+)(out). Functionally, produces ATP from ADP in the presence of a proton gradient across the membrane. The alpha chain is a regulatory subunit. The chain is ATP synthase subunit alpha from Gloeobacter violaceus (strain ATCC 29082 / PCC 7421).